Reading from the N-terminus, the 294-residue chain is MTKAVLTSISQLALKALLYEVSLSPKPGLVDRFDNGAHDDMSFMTFIDSMIALSPFFQAYIETGFAYAKEEPLLLFNRLRQLGQKAEETMFCATQGINTHKGLNFSMALLLGATGAYLARTPHLMTDLGCFSKEDTLAICRLVKPMTAHLIQADLGHLNTKKEFTYGEQLFVTYGIKGPRGEASEGFTTLTNHALPYFRQMISQNDPETSQLRLLVYLMSIVEDGNLIHRGGIEAWKGVKADMRLLLQQDLSTTDLRLALSSYNQCLINQHLSPGGAADLLALTFYFAFLEKLL.

The protein belongs to the CitG/MdcB family.

It carries out the reaction 3'-dephospho-CoA + ATP = 2'-(5''-triphospho-alpha-D-ribosyl)-3'-dephospho-CoA + adenine. The polypeptide is Probable 2-(5''-triphosphoribosyl)-3'-dephosphocoenzyme-A synthase (Streptococcus pyogenes serotype M18 (strain MGAS8232)).